The chain runs to 1031 residues: Protein translocase subunit SecA (1031 aa).

Residues Q143, 161–165 (GEGKT), and D661 contribute to the ATP site. Over residues 963-973 (KERLVAKHEES) the composition is skewed to basic and acidic residues. Residues 963 to 1031 (KERLVAKHEE…GKKYKNCCGR (69 aa)) form a disordered region. Zn(2+) is bound by residues C1017, C1019, C1028, and C1029.

Belongs to the SecA family. As to quaternary structure, monomer and homodimer. Part of the essential Sec protein translocation apparatus which comprises SecA, SecYEG and auxiliary proteins SecDF. Other proteins may also be involved. Zn(2+) serves as cofactor.

Its subcellular location is the cell inner membrane. The protein resides in the cytoplasm. It catalyses the reaction ATP + H2O + cellular proteinSide 1 = ADP + phosphate + cellular proteinSide 2.. Functionally, part of the Sec protein translocase complex. Interacts with the SecYEG preprotein conducting channel. Has a central role in coupling the hydrolysis of ATP to the transfer of proteins into and across the cell membrane, serving as an ATP-driven molecular motor driving the stepwise translocation of polypeptide chains across the membrane. This is Protein translocase subunit SecA from Prosthecochloris aestuarii (strain DSM 271 / SK 413).